Reading from the N-terminus, the 339-residue chain is Phosphate acyltransferase (339 aa).

The protein belongs to the PlsX family. As to quaternary structure, homodimer. Probably interacts with PlsY.

Its subcellular location is the cytoplasm. The catalysed reaction is a fatty acyl-[ACP] + phosphate = an acyl phosphate + holo-[ACP]. It functions in the pathway lipid metabolism; phospholipid metabolism. Functionally, catalyzes the reversible formation of acyl-phosphate (acyl-PO(4)) from acyl-[acyl-carrier-protein] (acyl-ACP). This enzyme utilizes acyl-ACP as fatty acyl donor, but not acyl-CoA. This chain is Phosphate acyltransferase, found in Tolumonas auensis (strain DSM 9187 / NBRC 110442 / TA 4).